A 184-amino-acid chain; its full sequence is ATP synthase subunit b, chloroplastic (184 aa).

A helical membrane pass occupies residues 26-48 (ILATNLINLSVVLGVLIFFGKGV).

It belongs to the ATPase B chain family. As to quaternary structure, F-type ATPases have 2 components, F(1) - the catalytic core - and F(0) - the membrane proton channel. F(1) has five subunits: alpha(3), beta(3), gamma(1), delta(1), epsilon(1). F(0) has four main subunits: a(1), b(1), b'(1) and c(10-14). The alpha and beta chains form an alternating ring which encloses part of the gamma chain. F(1) is attached to F(0) by a central stalk formed by the gamma and epsilon chains, while a peripheral stalk is formed by the delta, b and b' chains.

The protein resides in the plastid. The protein localises to the chloroplast thylakoid membrane. Its function is as follows. F(1)F(0) ATP synthase produces ATP from ADP in the presence of a proton or sodium gradient. F-type ATPases consist of two structural domains, F(1) containing the extramembraneous catalytic core and F(0) containing the membrane proton channel, linked together by a central stalk and a peripheral stalk. During catalysis, ATP synthesis in the catalytic domain of F(1) is coupled via a rotary mechanism of the central stalk subunits to proton translocation. In terms of biological role, component of the F(0) channel, it forms part of the peripheral stalk, linking F(1) to F(0). The protein is ATP synthase subunit b, chloroplastic of Calycanthus floridus var. glaucus (Eastern sweetshrub).